Consider the following 709-residue polypeptide: Tyrosine-protein phosphatase cdc-14 (709 aa).

The Tyrosine-protein phosphatase domain occupies Asp-196–Ser-354. Catalysis depends on Cys-295, which acts as the Phosphocysteine intermediate. The Nuclear localization signal signature appears at Lys-366–Arg-371. The Nuclear export signal signature appears at Leu-372–Leu-381. Disordered stretches follow at residues Val-403–Thr-541, Arg-573–Pro-594, and Glu-628–Ser-661. The segment covering Gln-404–Pro-413 has biased composition (polar residues). The span at Thr-463 to Thr-479 shows a compositional bias: low complexity. 2 stretches are compositionally biased toward polar residues: residues Pro-480–Leu-490 and Pro-501–Gly-521. A compositionally biased stretch (low complexity) spans Arg-526–Thr-541. Over residues Pro-639–Lys-649 the composition is skewed to polar residues.

This sequence belongs to the protein-tyrosine phosphatase family. Non-receptor class CDC14 subfamily.

Its subcellular location is the cytoplasm. It is found in the cytoskeleton. The protein localises to the microtubule organizing center. It localises to the centrosome. The protein resides in the spindle. Its subcellular location is the midbody. It is found in the nucleus. It catalyses the reaction O-phospho-L-tyrosyl-[protein] + H2O = L-tyrosyl-[protein] + phosphate. Inhibited by sodium orthovanadate. Weakly inhibited by sodium fluoride and okadaic acid. Its function is as follows. Protein phosphatase that negatively regulates the G1-to-S phase transition to inhibit the cell cycle and establish quiescence in cells of multiple lineages including vulval, hypodermal and intestinal. Promotes nuclear accumulation and activity of the cyclin-dependent kinase inhibitor cki-1 which leads to inhibition of G1 progression during vulval tissue development. Has been shown to not be required for cytokinesis. However, in the embryo, in a contrasting study, has been shown to act as a regulator of central spindle formation and cytokinesis, and may be required for localization of the spindle component zen-4, and its interacting partner air-2 at the spindle during late cell divisions. In terms of biological role, main regulator of cell cycle arrest in vulval precursor cells. This Caenorhabditis elegans protein is Tyrosine-protein phosphatase cdc-14.